Here is a 1276-residue protein sequence, read N- to C-terminus: Receptor-type guanylate cyclase gcy-28 (1276 aa).

A signal peptide spans 1–18; sequence MLRWLTLLSCILLTALHG. Topologically, residues 19–515 are extracellular; the sequence is NIVEDVGAAQ…KSKCPGYPLH (497 aa). 8 N-linked (GlcNAc...) asparagine glycosylation sites follow: Asn87, Asn196, Asn338, Asn384, Asn387, Asn414, Asn428, and Asn444. The chain crosses the membrane as a helical span at residues 516–536; sequence VYLLMGSFLLILVLVGLFIFF. Residues 537-1276 are Cytoplasmic-facing; sequence WRRYKLEQEL…EIPDFGEEFA (740 aa). Disordered stretches follow at residues 562 to 601 and 635 to 709; these read ESQK…NSDK and IFTR…KKSL. The segment covering 567-577 has biased composition (basic residues); the sequence is NEKKKAKKRKN. Composition is skewed to polar residues over residues 590 to 599 and 642 to 660; these read RSTSRSSVNS and TPPS…SLQK. One can recognise a Protein kinase domain in the interval 717 to 1013; it reads SFGMVSFKSG…SSVRKAVRSL (297 aa). ATP contacts are provided by residues 723 to 731 and Lys756; that span reads FKSGSGGSV. Residues 1017-1063 adopt a coiled-coil conformation; that stretch reads NETSNLVDNLLKRMEQYANNLEGLVEERTQEYLAEKKKVEELLHQLL. Positions 1086–1215 constitute a Guanylate cyclase domain; sequence TIYFSDIVGF…DTVNTSSRME (130 aa). Asp1091, Ile1092, and Asp1135 together coordinate Mg(2+).

This sequence belongs to the adenylyl cyclase class-4/guanylyl cyclase family. In terms of tissue distribution, expressed in head neurons, ventral cord and tail neurons, body wall muscle, hypodermis, somatic gonad and intestine. Isoform d is expressed specifically in AIA interneurons.

The protein resides in the cell membrane. It localises to the cell projection. Its subcellular location is the dendrite. The protein localises to the axon. It is found in the perikaryon. It catalyses the reaction GTP = 3',5'-cyclic GMP + diphosphate. Its function is as follows. Guanylate cyclase involved in the production of the second messenger cGMP. Regulates olfactory perception in AWC sensory neurons although may not be involved in the primary sensory transduction steps. Isoforms c: Regulates sensory integration of conflicting sensory cues in AIA interneurons. In terms of biological role, regulates sensory integration of conflicting sensory cues in AIA interneurons. The chain is Receptor-type guanylate cyclase gcy-28 from Caenorhabditis elegans.